Consider the following 294-residue polypeptide: MASSREIRNKIKSIKNTQKITRAMEMVAASKMRKAQDRMKKARPYGEKIRNVAAHMSKASVEYRHPFLIDRNSVKRVGIIVVTSDKGLCGGLNTNVLRRALNEIRVWGAEGEQIEVCCIGNKGLGFMSRLGVRVISQVTGLGDAPNMEKLIGAVKVVLDAYTDDHFDRVYIFYNRFVNTMKQIPVMEQLLPLTDEHMRDDGNEAKPARAPWDYIYEPEAKPVIDDIMIRYIEALVYQAVAENMASEQSARMVAMKAASDNAGNLIDELTLIYNKSRQAAITKELSEIVGGAAAV.

It belongs to the ATPase gamma chain family. F-type ATPases have 2 components, CF(1) - the catalytic core - and CF(0) - the membrane proton channel. CF(1) has five subunits: alpha(3), beta(3), gamma(1), delta(1), epsilon(1). CF(0) has three main subunits: a, b and c.

The protein localises to the cell inner membrane. Produces ATP from ADP in the presence of a proton gradient across the membrane. The gamma chain is believed to be important in regulating ATPase activity and the flow of protons through the CF(0) complex. In Nitrosomonas eutropha (strain DSM 101675 / C91 / Nm57), this protein is ATP synthase gamma chain.